The primary structure comprises 320 residues: Short-chain dehydrogenase TIC 32 B, chloroplastic (320 aa).

Residues 40 to 46 (GGTSGIG), 92 to 93 (DL), Asn119, and Thr140 contribute to the NADP(+) site. A substrate-binding site is contributed by Ser174. The active-site Proton acceptor is Tyr196. The interaction with calmodulin stretch occupies residues 301–317 (DTTLADKLWDFSIKLVD).

It belongs to the short-chain dehydrogenases/reductases (SDR) family. As to quaternary structure, part of the Tic complex.

The protein resides in the plastid. Its subcellular location is the chloroplast inner membrane. Its function is as follows. Involved in protein precursor import into chloroplasts. The chain is Short-chain dehydrogenase TIC 32 B, chloroplastic from Brassica napus (Rape).